The following is a 221-amino-acid chain: Interleukin-12 subunit alpha (221 aa).

The first 25 residues, 1-25 (MCPLRSLLLLSTLVLLHHLPHLSLG), serve as a signal peptide directing secretion. Cystine bridges form between Cys-39–Cys-112, Cys-66–Cys-198, and Cys-87–Cys-125. N-linked (GlcNAc...) asparagine glycosylation is found at Asn-41 and Asn-95.

Belongs to the IL-6 superfamily. As to quaternary structure, heterodimer with IL12B; disulfide-linked. This heterodimer is known as interleukin IL-12. Heterodimer with EBI3/IL27B; not disulfide-linked. This heterodimer is known as interleukin IL-35. Interacts with NBR1; this interaction promotes IL-12 secretion.

The protein localises to the secreted. In terms of biological role, heterodimerizes with IL12B to form the IL-12 cytokine or with EBI3/IL27B to form the IL-35 cytokine. IL-12 is primarily produced by professional antigen-presenting cells (APCs) such as B-cells and dendritic cells (DCs) as well as macrophages and granulocytes and regulates T-cell and natural killer-cell responses, induces the production of interferon-gamma (IFN-gamma), favors the differentiation of T-helper 1 (Th1) cells and is an important link between innate resistance and adaptive immunity. Mechanistically, exerts its biological effects through a receptor composed of IL12R1 and IL12R2 subunits. Binding to the receptor results in the rapid tyrosine phosphorylation of a number of cellular substrates including the JAK family kinases TYK2 and JAK2. In turn, recruited STAT4 gets phosphorylated and translocates to the nucleus where it regulates cytokine/growth factor responsive genes. As part of IL-35, plays essential roles in maintaining the immune homeostasis of the liver microenvironment and also functions as an immune-suppressive cytokine. Mediates biological events through unconventional receptors composed of IL12RB2 and gp130/IL6ST heterodimers or homodimers. Signaling requires the transcription factors STAT1 and STAT4, which form a unique heterodimer that binds to distinct DNA sites. This chain is Interleukin-12 subunit alpha (IL12A), found in Cervus elaphus (Red deer).